Here is a 535-residue protein sequence, read N- to C-terminus: Suppressor of cytokine signaling 6 (535 aa).

Over residues 80 to 89 the composition is skewed to basic residues; it reads RLSAKQKSKG. Positions 80–105 are disordered; it reads RLSAKQKSKGKAGTPSGSSADEDTFS. The 108-residue stretch at 384–491 folds into the SH2 domain; that stretch reads WYWGPITRWE…TYPVRLTNPV (108 aa). Residues 486–535 form the SOCS box domain; that stretch reads RLTNPVSRFMQVRSLQYLCRFVIRQYTRIDLIQKLPLPNKMKDYLQEKHY.

In terms of assembly, interacts with RBCK1. Interacts with phosphorylated IRS4. Interacts with KIT (phosphorylated). Interacts with PIM3.

It functions in the pathway protein modification; protein ubiquitination. Its function is as follows. SOCS family proteins form part of a classical negative feedback system that regulates cytokine signal transduction. May be a substrate recognition component of a SCF-like ECS (Elongin BC-CUL2/5-SOCS-box protein) E3 ubiquitin-protein ligase complex which mediates the ubiquitination and subsequent proteasomal degradation of target proteins. Regulates KIT degradation by ubiquitination of the tyrosine-phosphorylated receptor. The sequence is that of Suppressor of cytokine signaling 6 (SOCS6) from Pongo abelii (Sumatran orangutan).